Consider the following 165-residue polypeptide: Putative TRAP transporter small permease protein HI_0051 (165 aa).

4 helical membrane passes run Leu20–Val40, Phe51–Val71, Ile94–Ala114, and Leu136–Ile156.

The protein belongs to the TRAP transporter small permease family.

Its subcellular location is the cell inner membrane. This Haemophilus influenzae (strain ATCC 51907 / DSM 11121 / KW20 / Rd) protein is Putative TRAP transporter small permease protein HI_0051.